The primary structure comprises 136 residues: Large-conductance mechanosensitive channel (136 aa).

4 helical membrane-spanning segments follow: residues 9 to 29, 32 to 52, 54 to 74, and 79 to 99; these read AFAS…GAAF, IVSS…LGGV, FSDL…VVIA, and IQTV…LKAI.

The protein belongs to the MscL family. As to quaternary structure, homopentamer.

The protein localises to the cell inner membrane. In terms of biological role, channel that opens in response to stretch forces in the membrane lipid bilayer. May participate in the regulation of osmotic pressure changes within the cell. The protein is Large-conductance mechanosensitive channel of Shewanella oneidensis (strain ATCC 700550 / JCM 31522 / CIP 106686 / LMG 19005 / NCIMB 14063 / MR-1).